The sequence spans 164 residues: Succinate dehydrogenase assembly factor 3, mitochondrial (164 aa).

Residues 1 to 51 (MRPTLLRLANASGPLPLSVSQASVQLIPPIPLYRRLLRAHRLLPVDMRYMG) constitute a mitochondrion transit peptide. The segment covering 136–145 (KSPEQIEREA) has biased composition (basic and acidic residues). The tract at residues 136–164 (KSPEQIEREANSAGVSPVNPNDPTTAGNS) is disordered. Polar residues predominate over residues 153 to 164 (VNPNDPTTAGNS).

The protein belongs to the complex I LYR family. SDHAF3 subfamily. As to quaternary structure, interacts with the iron-sulfur protein subunit within the SDH catalytic dimer.

The protein resides in the mitochondrion matrix. In terms of biological role, plays an essential role in the assembly of succinate dehydrogenase (SDH), an enzyme complex (also referred to as respiratory complex II) that is a component of both the tricarboxylic acid (TCA) cycle and the mitochondrial electron transport chain, and which couples the oxidation of succinate to fumarate with the reduction of ubiquinone (coenzyme Q) to ubiquinol. Promotes maturation of the iron-sulfur protein subunit of the SDH catalytic dimer, protecting it from the deleterious effects of oxidants. May act together with SDHAF1. The polypeptide is Succinate dehydrogenase assembly factor 3, mitochondrial (Cryptococcus neoformans var. neoformans serotype D (strain B-3501A) (Filobasidiella neoformans)).